A 328-amino-acid polypeptide reads, in one-letter code: Oligopeptide transport ATP-binding protein AppD (328 aa).

The ABC transporter domain maps to 5–256 (LEVNNLKTYF…PLHPYTEGLL (252 aa)). Residue 41 to 48 (GESGSGKS) coordinates ATP.

This sequence belongs to the ABC transporter superfamily.

The protein resides in the cell membrane. Functionally, this protein is a component of an oligopeptide permease, a binding protein-dependent transport system. This APP system can completely substitute for the OPP system in both sporulation and genetic competence, though, unlike OPP, is incapable of transporting tripeptides. Probably responsible for energy coupling to the transport system. The sequence is that of Oligopeptide transport ATP-binding protein AppD (appD) from Bacillus subtilis (strain 168).